The chain runs to 231 residues: Small ribosomal subunit protein uS3 (231 aa).

The 70-residue stretch at Val-17 to Gln-86 folds into the KH type-2 domain.

Belongs to the universal ribosomal protein uS3 family. As to quaternary structure, part of the 30S ribosomal subunit.

Functionally, binds the lower part of the 30S subunit head. The protein is Small ribosomal subunit protein uS3 of Methanoregula boonei (strain DSM 21154 / JCM 14090 / 6A8).